Here is a 255-residue protein sequence, read N- to C-terminus: F-box/SPRY domain-containing protein 1 (255 aa).

One can recognise an F-box domain in the interval 3–51; that stretch reads DPVAALCNYNVLEVIFSYLELDDLSHCSQVCKSWYHFLNDENSDVWRWH. Positions 61–253 constitute a B30.2/SPRY domain; it reads LKSDLLSSVS…VSMVYLGTPL (193 aa).

This sequence belongs to the FBXO45/Fsn family. Component of an E3 ubiquitin ligase complex composed of hiw and Fsn.

The protein resides in the synapse. Its pathway is protein modification; protein ubiquitination. Functionally, required in the presynaptic motoneuron to down-regulate the levels of wnd and restrain synaptic terminal growth at the neuromuscular junction (NMJ). The chain is F-box/SPRY domain-containing protein 1 from Drosophila simulans (Fruit fly).